Consider the following 1491-residue polypeptide: Neurexin-1a (1491 aa).

Positions 1 to 27 (MSFSMRNGAHLIWIGLLVCCLVDMGAS) are cleaved as a signal peptide. The Laminin G-like 1 domain maps to 28–208 (MEFTGAEGQW…SDICEADHIC (181 aa)). The Extracellular portion of the chain corresponds to 28 to 1415 (MEFTGAEGQW…EVIRESSSTT (1388 aa)). Residues 198-236 (NSDICEADHICLNGGVCSIVNDEPICDCSETGFQGKDCS) enclose the EGF-like 1 domain. Disulfide bonds link Cys202–Cys214, Cys208–Cys223, and Cys225–Cys235. 2 Laminin G-like domains span residues 263 to 460 (MATF…AFKC) and 467 to 661 (DPVT…KPSC). Residues Asp309, Leu326, and Met394 each coordinate Ca(2+). Cystine bridges form between Cys424–Cys460, Cys632–Cys661, Cys669–Cys680, Cys674–Cys689, and Cys691–Cys701. The region spanning 665–702 (PPKQCLSNPCLNSGTCREGWNRYVCDCSGTGYLGRSCE) is the EGF-like 2 domain. 2 Laminin G-like domains span residues 707 to 880 (ILSY…IDYC) and 894 to 1069 (DPVT…ERGC). 4 disulfides stabilise this stretch: Cys1041/Cys1069, Cys1076/Cys1087, Cys1081/Cys1096, and Cys1098/Cys1108. The EGF-like 3 domain occupies 1072–1109 (PSTTCQEDSCSNQGVCLQQWEGFSCDCSMTSYGGPLCN). The Laminin G-like 6 domain occupies 1113–1314 (TTYIFGRDGG…DPNVRVEGSA (202 aa)). The interval 1318–1408 (GDMPSSSITP…AKGYPSPEVI (91 aa)) is disordered. Over residues 1322-1353 (SSSITPQSSVSAAGNRSETSPSITDITTTTAS) the composition is skewed to low complexity. Polar residues predominate over residues 1354 to 1364 (NRQGKQTTTPQ). The helical transmembrane segment at 1416–1436 (GMVVGIVAAAALCILILLYAM) threads the bilayer. Over 1437-1491 (YKYRNRDEGSYHVDESRNYISNSATQPNGAAVKEKPIGVPKNKKDKKNKDKEYYV) the chain is Cytoplasmic. The segment at 1457 to 1491 (SNSATQPNGAAVKEKPIGVPKNKKDKKNKDKEYYV) is disordered.

The protein belongs to the neurexin family.

The protein localises to the membrane. In terms of biological role, neuronal cell surface protein that may be involved in cell recognition and cell adhesion. The chain is Neurexin-1a (nrxn1a) from Danio rerio (Zebrafish).